An 863-amino-acid polypeptide reads, in one-letter code: Dipeptidyl peptidase 9 (863 aa).

The disordered stretch occupies residues 1-20 (MATTGTPTADRGDAAATDDP). N-acetylalanine is present on Ala2. Residues Ser730, Asp808, and His840 each act as charge relay system in the active site. Ser730 contacts Val-boroPro.

Belongs to the peptidase S9B family. DPPIV subfamily. Homodimer. Forms a ternary complex with NLRP1, composed of a DPP9 homodimer, one full-length NLRP1 protein, and one cleaved C-terminus of NLRP1 (NACHT, LRR and PYD domains-containing protein 1, C-terminus). Forms a ternary complex with CARD8, composed of a DPP9 homodimer, one full-length NLRP1 protein, and one cleaved C-terminus of CARD8 (Caspase recruitment domain-containing protein 8, C-terminus). In the ternary complex, only one subunit of the DPP9 homodimer is bound to NLRP1 or CARD8. As to expression, ubiquitously expressed, with highest levels in liver, heart and muscle, and lowest levels in brain.

The protein localises to the cytoplasm. The protein resides in the cytosol. Its subcellular location is the nucleus. The enzyme catalyses Release of an N-terminal dipeptide, Xaa-Yaa-|-Zaa-, from a polypeptide, preferentially when Yaa is Pro, provided Zaa is neither Pro nor hydroxyproline.. Its activity is regulated as follows. Inhibited by the serine proteinase inhibitor 4-(2-aminoethyl)benzenesulphonyl fluoride (AEBSF), and by di-isopropylfluorophosphate. Inhibited by Val-boroPro (Talabostat, PT-100), a non-selective inhibitor, which triggers pyroptosis in monocytes and macrophages. Val-boroPro inhibits activity by binding to the active site, mimicking a substrate-bound state, thereby displacing the C-terminal fragment of NLRP1, leading to activation of the NLRP1 inflammasome. In contrast, Val-boroPro does not directly displaces CARD8: it acts by promoting degradation of the N-terminal part of CARD8, leading to indirect disruption of the ternary complex. Chemical inhibition of DPP9 by Val-boroPro in HIV-1-infected cells activates the CARD8 inflammasome, triggering cell death, offering a promising strategy for the elimination of HIV-1 reservoirs in people living with HIV-1. Dipeptidyl peptidase that cleaves off N-terminal dipeptides from proteins having a Pro or Ala residue at position 2. Acts as a key inhibitor of caspase-1-dependent monocyte and macrophage pyroptosis in resting cells by preventing activation of NLRP1 and CARD8. Sequesters the cleaved C-terminal part of NLRP1 and CARD8, which respectively constitute the active part of the NLRP1 and CARD8 inflammasomes, in a ternary complex, thereby preventing their oligomerization and activation. The dipeptidyl peptidase activity is required to suppress NLRP1 and CARD8; however, neither NLRP1 nor CARD8 are bona fide substrates of DPP9, suggesting the existence of substrate(s) required for NLRP1 and CARD8 inhibition. This Homo sapiens (Human) protein is Dipeptidyl peptidase 9.